The chain runs to 395 residues: S-adenosylmethionine synthase (395 aa).

ATP is bound at residue His-14. Asp-16 provides a ligand contact to Mg(2+). K(+) is bound at residue Glu-42. L-methionine contacts are provided by Glu-55 and Gln-98. The interval 98 to 108 (QSPDIAMGVDK) is flexible loop. Residues 175-177 (DGK), 242-243 (RF), Asp-251, 257-258 (RK), Ala-274, and Lys-278 each bind ATP. Asp-251 lines the L-methionine pocket. Lys-282 provides a ligand contact to L-methionine.

The protein belongs to the AdoMet synthase family. In terms of assembly, homotetramer; dimer of dimers. Requires Mg(2+) as cofactor. It depends on K(+) as a cofactor.

The protein localises to the cytoplasm. The catalysed reaction is L-methionine + ATP + H2O = S-adenosyl-L-methionine + phosphate + diphosphate. Its pathway is amino-acid biosynthesis; S-adenosyl-L-methionine biosynthesis; S-adenosyl-L-methionine from L-methionine: step 1/1. In terms of biological role, catalyzes the formation of S-adenosylmethionine (AdoMet) from methionine and ATP. The overall synthetic reaction is composed of two sequential steps, AdoMet formation and the subsequent tripolyphosphate hydrolysis which occurs prior to release of AdoMet from the enzyme. The chain is S-adenosylmethionine synthase from Thermosipho melanesiensis (strain DSM 12029 / CIP 104789 / BI429).